The primary structure comprises 51 residues: Small polypeptide DEVIL 1 (51 aa).

The segment at 1-25 (MEMKRVMMSSAERSKEKKRSISRRL) is disordered. The span at 16-25 (EKKRSISRRL) shows a compositional bias: basic residues. The tract at residues 20-51 (SISRRLGKYMKEQKGRIYIIRRCMVMLLCSHD) is required for DVL/RTFL small polypeptide activity. Residues 28-44 (YMKEQKGRIYIIRRCMV) form a helical membrane-spanning segment.

This sequence belongs to the DVL/RTFL small polypeptides family. In terms of tissue distribution, mostly expressed in leaves and, to a lower extent, in roots and stems.

The protein resides in the cell membrane. Functionally, small polypeptide acting as a regulatory molecule which coordinates cellular responses required for differentiation, growth and development, including leaves shape, pedicule elongation, inflorescence organization and fruit maturation, probably by restricting polar cell proliferation in lateral organs and coordinating socket cell recruitment and differentiation at trichome sites. This chain is Small polypeptide DEVIL 1, found in Arabidopsis thaliana (Mouse-ear cress).